We begin with the raw amino-acid sequence, 237 residues long: Phosphoribosylaminoimidazole-succinocarboxamide synthase (237 aa).

Belongs to the SAICAR synthetase family.

It carries out the reaction 5-amino-1-(5-phospho-D-ribosyl)imidazole-4-carboxylate + L-aspartate + ATP = (2S)-2-[5-amino-1-(5-phospho-beta-D-ribosyl)imidazole-4-carboxamido]succinate + ADP + phosphate + 2 H(+). The protein operates within purine metabolism; IMP biosynthesis via de novo pathway; 5-amino-1-(5-phospho-D-ribosyl)imidazole-4-carboxamide from 5-amino-1-(5-phospho-D-ribosyl)imidazole-4-carboxylate: step 1/2. This is Phosphoribosylaminoimidazole-succinocarboxamide synthase from Pseudomonas fluorescens (strain SBW25).